Here is a 505-residue protein sequence, read N- to C-terminus: MATIRADEISNIIRERIEQYNREVKIVNTGTVLQVGDGIARIYGLDEVMAGELVEFEEGTIGIALNLESKNVGVVLMGDGLMIQEGSSVKATGRIAQIPVSEAYLGRVINALAKPIDGRGEISSSESRLIESPAPGIISRRSVYEPLQTGLIAIDAMIPIGRGQRELIIGDRQTGKTAVATDTILNQQGNNVICVYVAIGQKASSVAQVVNALQERGAMEYTIVVAEAADSPATLQYLAPYTGAALAEYFMYRERHTLIIYDDPSKQAQAYRQMSLLLRRPPGREAYPGDVFYLHSRLLERAAKLSSRLGEGSMTALPIVETQSGDVSAYIPTNVISITDGQIFLSADLFNAGIRPAINVGISVSRVGSAAQIKAMKQVAGKLKLELAQFAELEAFAQFSSDLDKATQNQLARGQRLRELLKQSQAKPLTVAEQILTIYTGTNGYLDSFEIAQVRKFLDELRDYVKTRKPQFEEIISSTKIFTEEAQALLKDAIQEQKELFLVQE.

Position 170–177 (170–177 (GDRQTGKT)) interacts with ATP.

The protein belongs to the ATPase alpha/beta chains family. In terms of assembly, F-type ATPases have 2 components, CF(1) - the catalytic core - and CF(0) - the membrane proton channel. CF(1) has five subunits: alpha(3), beta(3), gamma(1), delta(1), epsilon(1). CF(0) has four main subunits: a, b, b' and c.

The protein resides in the plastid. The protein localises to the chloroplast thylakoid membrane. It catalyses the reaction ATP + H2O + 4 H(+)(in) = ADP + phosphate + 5 H(+)(out). Produces ATP from ADP in the presence of a proton gradient across the membrane. The alpha chain is a regulatory subunit. The polypeptide is ATP synthase subunit alpha, chloroplastic (Oenothera parviflora (Small-flowered evening primrose)).